The sequence spans 125 residues: Holo-[acyl-carrier-protein] synthase (125 aa).

Positions 8 and 57 each coordinate Mg(2+).

Belongs to the P-Pant transferase superfamily. AcpS family. Mg(2+) is required as a cofactor.

The protein resides in the cytoplasm. It catalyses the reaction apo-[ACP] + CoA = holo-[ACP] + adenosine 3',5'-bisphosphate + H(+). Functionally, transfers the 4'-phosphopantetheine moiety from coenzyme A to a Ser of acyl-carrier-protein. The chain is Holo-[acyl-carrier-protein] synthase from Aromatoleum aromaticum (strain DSM 19018 / LMG 30748 / EbN1) (Azoarcus sp. (strain EbN1)).